The sequence spans 204 residues: High mobility group-T protein (204 aa).

2 consecutive DNA-binding regions (HMG box) follow at residues 8–78 (PRGK…RSYI) and 94–162 (PKRP…TAYR). A disordered region spans residues 162–204 (RNKGKVPVSMPAKAAAPAKDDDDDDDDDDDDEDDDDDDDEDDE). Acidic residues predominate over residues 181–204 (DDDDDDDDDDDDEDDDDDDDEDDE).

The protein belongs to the HMGB family.

It is found in the nucleus. The protein resides in the chromosome. In terms of biological role, binds preferentially single-stranded DNA and unwinds double-stranded DNA. This Oncorhynchus mykiss (Rainbow trout) protein is High mobility group-T protein.